The primary structure comprises 283 residues: Formamidopyrimidine-DNA glycosylase (283 aa).

Pro-2 serves as the catalytic Schiff-base intermediate with DNA. The active-site Proton donor is Glu-3. The active-site Proton donor; for beta-elimination activity is the Lys-61. The DNA site is built by His-94, Arg-113, and Lys-159. The FPG-type zinc finger occupies 245-279 (DAYGREGESCRRCGAVMRREKFMNRSSFYCPKCQP). Residue Arg-269 is the Proton donor; for delta-elimination activity of the active site.

The protein belongs to the FPG family. Monomer. Zn(2+) serves as cofactor.

It catalyses the reaction Hydrolysis of DNA containing ring-opened 7-methylguanine residues, releasing 2,6-diamino-4-hydroxy-5-(N-methyl)formamidopyrimidine.. It carries out the reaction 2'-deoxyribonucleotide-(2'-deoxyribose 5'-phosphate)-2'-deoxyribonucleotide-DNA = a 3'-end 2'-deoxyribonucleotide-(2,3-dehydro-2,3-deoxyribose 5'-phosphate)-DNA + a 5'-end 5'-phospho-2'-deoxyribonucleoside-DNA + H(+). Functionally, involved in base excision repair of DNA damaged by oxidation or by mutagenic agents. Acts as a DNA glycosylase that recognizes and removes damaged bases. Has a preference for oxidized purines, such as 7,8-dihydro-8-oxoguanine (8-oxoG). Has AP (apurinic/apyrimidinic) lyase activity and introduces nicks in the DNA strand. Cleaves the DNA backbone by beta-delta elimination to generate a single-strand break at the site of the removed base with both 3'- and 5'-phosphates. The chain is Formamidopyrimidine-DNA glycosylase from Mycobacterium avium (strain 104).